Here is a 194-residue protein sequence, read N- to C-terminus: Orotate phosphoribosyltransferase (194 aa).

Glu116–Ser124 is a 5-phospho-alpha-D-ribose 1-diphosphate binding site. Residues Thr120 and Arg148 each contribute to the orotate site.

Belongs to the purine/pyrimidine phosphoribosyltransferase family. PyrE subfamily. Homodimer. The cofactor is Mg(2+).

The enzyme catalyses orotidine 5'-phosphate + diphosphate = orotate + 5-phospho-alpha-D-ribose 1-diphosphate. It participates in pyrimidine metabolism; UMP biosynthesis via de novo pathway; UMP from orotate: step 1/2. Functionally, catalyzes the transfer of a ribosyl phosphate group from 5-phosphoribose 1-diphosphate to orotate, leading to the formation of orotidine monophosphate (OMP). This is Orotate phosphoribosyltransferase from Caulobacter vibrioides (strain ATCC 19089 / CIP 103742 / CB 15) (Caulobacter crescentus).